The chain runs to 76 residues: Conotoxin PnMKLT1-1111 (76 aa).

The first 22 residues, 1 to 22 (MKLTCMMIVAVLFLTAWTVVTA), serve as a signal peptide directing secretion. Positions 23–50 (VPHSNKRLANLYLKARHEMKNPEASNVD) are excised as a propeptide. 3 cysteine pairs are disulfide-bonded: Cys-53–Cys-67, Cys-60–Cys-71, and Cys-66–Cys-75.

The protein belongs to the conotoxin O1 superfamily. As to expression, expressed by the venom duct.

It is found in the secreted. This chain is Conotoxin PnMKLT1-1111, found in Conus pennaceus (Feathered cone).